Here is a 311-residue protein sequence, read N- to C-terminus: Transmembrane protein 177 (311 aa).

Residues 1-17 are Mitochondrial matrix-facing; it reads MAGPLWRTAAFVQRHRT. Residues 18–38 form a helical membrane-spanning segment; the sequence is GLLVGSCAGLFGVPISYHLFP. Over 39 to 166 the chain is Mitochondrial intermembrane; sequence DPVVQWLYQY…EVVYLESSTT (128 aa). A helical membrane pass occupies residues 167–187; the sequence is AVHALLAPACLAGTWALGVGA. Residues 188–197 lie on the Mitochondrial matrix side of the membrane; that stretch reads KYTLGLHAGP. A helical transmembrane segment spans residues 198–218; sequence MNLRAAFSLVAAVAGFVAYAF. The Mitochondrial intermembrane segment spans residues 219-311; that stretch reads SQDSLTHAVE…WRGMLNPGRS (93 aa).

The protein belongs to the TMEM177 family. Found in a complex with COX20, COA6, MT-CO2/COX2, COX18, SCO1 and SCO2. Interacts with COX20. Interacts with COX1, MT-CO2/COX2, SCO1 and SCO2 in a COX20-dependent manner.

Its subcellular location is the mitochondrion inner membrane. Functionally, plays a role in the early steps of cytochrome c oxidase subunit II (MT-CO2/COX2) maturation and is required for the stabilization of COX20 and the newly synthesized MT-CO2/COX2 protein. In Homo sapiens (Human), this protein is Transmembrane protein 177 (TMEM177).